The following is a 360-amino-acid chain: Phospho-N-acetylmuramoyl-pentapeptide-transferase (360 aa).

10 consecutive transmembrane segments (helical) span residues 26-46, 70-90, 94-114, 132-152, 168-188, 199-219, 236-256, 263-283, 288-308, and 338-358; these read AILS…IMIK, GTPT…ILLW, SNPY…VGFV, WKYF…YAYG, VMPQ…VGTS, GLAI…AWAT, ASEL…FLWF, VFMG…IAVL, LVLV…ILQV, and VIVR…ATLK.

The protein belongs to the glycosyltransferase 4 family. MraY subfamily. It depends on Mg(2+) as a cofactor.

The protein localises to the cell inner membrane. The enzyme catalyses UDP-N-acetyl-alpha-D-muramoyl-L-alanyl-gamma-D-glutamyl-meso-2,6-diaminopimeloyl-D-alanyl-D-alanine + di-trans,octa-cis-undecaprenyl phosphate = di-trans,octa-cis-undecaprenyl diphospho-N-acetyl-alpha-D-muramoyl-L-alanyl-D-glutamyl-meso-2,6-diaminopimeloyl-D-alanyl-D-alanine + UMP. Its pathway is cell wall biogenesis; peptidoglycan biosynthesis. Its function is as follows. Catalyzes the initial step of the lipid cycle reactions in the biosynthesis of the cell wall peptidoglycan: transfers peptidoglycan precursor phospho-MurNAc-pentapeptide from UDP-MurNAc-pentapeptide onto the lipid carrier undecaprenyl phosphate, yielding undecaprenyl-pyrophosphoryl-MurNAc-pentapeptide, known as lipid I. This chain is Phospho-N-acetylmuramoyl-pentapeptide-transferase, found in Vibrio parahaemolyticus serotype O3:K6 (strain RIMD 2210633).